Here is a 308-residue protein sequence, read N- to C-terminus: Putative cathepsin L 3 (308 aa).

The N-terminal stretch at 1 to 21 (MKQFLTAAIVTLLMTAGYYHL) is a signal peptide. A propeptide spans 22–110 (QEDDTNDFER…GASLPEVQLE (89 aa)) (activation peptide). 2 cysteine pairs are disulfide-bonded: Cys129-Cys170 and Cys254-Cys298. Catalysis depends on residues His261 and Asn278.

The protein belongs to the peptidase C1 family.

It localises to the secreted. The catalysed reaction is Specificity close to that of papain. As compared to cathepsin B, cathepsin L exhibits higher activity toward protein substrates, but has little activity on Z-Arg-Arg-NHMec, and no peptidyl-dipeptidase activity.. Functionally, may be involved in extracellular digestion. The sequence is that of Putative cathepsin L 3 from Paramecium tetraurelia.